The following is a 455-amino-acid chain: Bifunctional protein GlmU (455 aa).

The tract at residues M1 to R226 is pyrophosphorylase. UDP-N-acetyl-alpha-D-glucosamine contacts are provided by residues L7–G10, K21, Q73, and G78–T79. D103 lines the Mg(2+) pocket. Residues G140, E155, N170, and N224 each coordinate UDP-N-acetyl-alpha-D-glucosamine. N224 serves as a coordination point for Mg(2+). Residues K227 to A247 form a linker region. An N-acetyltransferase region spans residues G248 to K455. UDP-N-acetyl-alpha-D-glucosamine-binding residues include R329 and K347. The active-site Proton acceptor is the H359. UDP-N-acetyl-alpha-D-glucosamine-binding residues include Y362 and N373. Acetyl-CoA contacts are provided by residues A376, N382 to Y383, A419, and R436.

This sequence in the N-terminal section; belongs to the N-acetylglucosamine-1-phosphate uridyltransferase family. In the C-terminal section; belongs to the transferase hexapeptide repeat family. As to quaternary structure, homotrimer. It depends on Mg(2+) as a cofactor.

The protein localises to the cytoplasm. It carries out the reaction alpha-D-glucosamine 1-phosphate + acetyl-CoA = N-acetyl-alpha-D-glucosamine 1-phosphate + CoA + H(+). It catalyses the reaction N-acetyl-alpha-D-glucosamine 1-phosphate + UTP + H(+) = UDP-N-acetyl-alpha-D-glucosamine + diphosphate. It functions in the pathway nucleotide-sugar biosynthesis; UDP-N-acetyl-alpha-D-glucosamine biosynthesis; N-acetyl-alpha-D-glucosamine 1-phosphate from alpha-D-glucosamine 6-phosphate (route II): step 2/2. It participates in nucleotide-sugar biosynthesis; UDP-N-acetyl-alpha-D-glucosamine biosynthesis; UDP-N-acetyl-alpha-D-glucosamine from N-acetyl-alpha-D-glucosamine 1-phosphate: step 1/1. The protein operates within bacterial outer membrane biogenesis; LPS lipid A biosynthesis. Its function is as follows. Catalyzes the last two sequential reactions in the de novo biosynthetic pathway for UDP-N-acetylglucosamine (UDP-GlcNAc). The C-terminal domain catalyzes the transfer of acetyl group from acetyl coenzyme A to glucosamine-1-phosphate (GlcN-1-P) to produce N-acetylglucosamine-1-phosphate (GlcNAc-1-P), which is converted into UDP-GlcNAc by the transfer of uridine 5-monophosphate (from uridine 5-triphosphate), a reaction catalyzed by the N-terminal domain. The protein is Bifunctional protein GlmU of Acaryochloris marina (strain MBIC 11017).